The following is a 287-amino-acid chain: Hydroxysteroid 11-beta-dehydrogenase 1-like protein (287 aa).

The N-terminal stretch at Met-1 to Ala-20 is a signal peptide. Residues Gly-41–Arg-67, Asp-92–Met-93, and Asn-119–Ile-121 each bind NADP(+). Ser-170 provides a ligand contact to substrate. Catalysis depends on Tyr-183, which acts as the Proton acceptor. NADP(+) contacts are provided by residues Tyr-183–Lys-187 and Gly-216–Ala-222.

It belongs to the short-chain dehydrogenases/reductases (SDR) family.

It is found in the secreted. It catalyses the reaction cortisone + NADPH + H(+) = cortisol + NADP(+). Unidirectional NADP(+)-dependent cortisol dehydrogenase (in vitro). The polypeptide is Hydroxysteroid 11-beta-dehydrogenase 1-like protein (HSD11B1L) (Gallus gallus (Chicken)).